The primary structure comprises 326 residues: Biotin synthase (326 aa).

In terms of domain architecture, Radical SAM core spans 40–264 (GQVQACTLVS…VLPRSYVRLA (225 aa)). [4Fe-4S] cluster-binding residues include Cys-55, Cys-59, and Cys-62. Cys-99, Cys-130, Cys-190, and Arg-262 together coordinate [2Fe-2S] cluster.

Belongs to the radical SAM superfamily. Biotin synthase family. In terms of assembly, homodimer. [4Fe-4S] cluster is required as a cofactor. Requires [2Fe-2S] cluster as cofactor.

It carries out the reaction (4R,5S)-dethiobiotin + (sulfur carrier)-SH + 2 reduced [2Fe-2S]-[ferredoxin] + 2 S-adenosyl-L-methionine = (sulfur carrier)-H + biotin + 2 5'-deoxyadenosine + 2 L-methionine + 2 oxidized [2Fe-2S]-[ferredoxin]. It participates in cofactor biosynthesis; biotin biosynthesis; biotin from 7,8-diaminononanoate: step 2/2. In terms of biological role, catalyzes the conversion of dethiobiotin (DTB) to biotin by the insertion of a sulfur atom into dethiobiotin via a radical-based mechanism. The protein is Biotin synthase of Halorhodospira halophila (strain DSM 244 / SL1) (Ectothiorhodospira halophila (strain DSM 244 / SL1)).